An 800-amino-acid chain; its full sequence is Putative antiporter subunit mnhA2 (800 aa).

The next 21 helical transmembrane spans lie at methionine 1 to leucine 21, valine 29 to isoleucine 49, glycine 78 to alanine 98, leucine 109 to alanine 129, isoleucine 133 to tryptophan 153, phenylalanine 167 to isoleucine 187, phenylalanine 209 to phenylalanine 229, threonine 241 to phenylalanine 261, valine 272 to alanine 292, glycine 300 to glycine 320, isoleucine 336 to leucine 356, isoleucine 387 to serine 407, tyrosine 424 to phenylalanine 444, proline 472 to valine 492, valine 528 to valine 548, isoleucine 595 to phenylalanine 615, glycine 627 to isoleucine 647, leucine 651 to methionine 671, leucine 676 to serine 696, threonine 712 to alanine 732, and leucine 768 to leucine 788.

Belongs to the CPA3 antiporters (TC 2.A.63) subunit A family. May form a heterooligomeric complex that consists of seven subunits: mnhA2, mnhB2, mnhC2, mnhD2, mnhE2, mnhF2 and mnhG2.

It is found in the cell membrane. This chain is Putative antiporter subunit mnhA2 (mnhA2), found in Staphylococcus epidermidis (strain ATCC 12228 / FDA PCI 1200).